A 505-amino-acid chain; its full sequence is Deoxyguanosinetriphosphate triphosphohydrolase (505 aa).

The HD domain maps to 66 to 273 (RLTHSMEVQQ…MEAADDISYC (208 aa)).

This sequence belongs to the dGTPase family. Type 1 subfamily. In terms of assembly, homotetramer. Mg(2+) is required as a cofactor.

It carries out the reaction dGTP + H2O = 2'-deoxyguanosine + triphosphate + H(+). Functionally, dGTPase preferentially hydrolyzes dGTP over the other canonical NTPs. The sequence is that of Deoxyguanosinetriphosphate triphosphohydrolase from Shigella flexneri.